The primary structure comprises 309 residues: Ornithine carbamoyltransferase (309 aa).

Carbamoyl phosphate-binding positions include 57 to 60 (STRT), glutamine 84, arginine 108, and 135 to 138 (HPCQ). Residues asparagine 166, aspartate 226, and 230–231 (SM) each bind L-ornithine. Carbamoyl phosphate contacts are provided by residues 265 to 266 (CL) and arginine 293.

The protein belongs to the aspartate/ornithine carbamoyltransferase superfamily. OTCase family.

It localises to the cytoplasm. It carries out the reaction carbamoyl phosphate + L-ornithine = L-citrulline + phosphate + H(+). Its pathway is amino-acid biosynthesis; L-arginine biosynthesis; L-arginine from L-ornithine and carbamoyl phosphate: step 1/3. Its function is as follows. Reversibly catalyzes the transfer of the carbamoyl group from carbamoyl phosphate (CP) to the N(epsilon) atom of ornithine (ORN) to produce L-citrulline. In Rhizorhabdus wittichii (strain DSM 6014 / CCUG 31198 / JCM 15750 / NBRC 105917 / EY 4224 / RW1) (Sphingomonas wittichii), this protein is Ornithine carbamoyltransferase.